A 739-amino-acid chain; its full sequence is Phosphoribosylformylglycinamidine synthase subunit PurL (739 aa).

Residue His52 is part of the active site. Positions 55 and 94 each coordinate ATP. Residue Glu96 coordinates Mg(2+). Substrate contacts are provided by residues 97-100 (SHNH) and Arg119. The active-site Proton acceptor is His98. Residue Asp120 participates in Mg(2+) binding. A substrate-binding site is contributed by Gln243. Asp273 serves as a coordination point for Mg(2+). 317-319 (ESQ) contributes to the substrate binding site. The ATP site is built by Asp500 and Gly537. Asn538 is a binding site for Mg(2+). Ser540 contacts substrate.

Belongs to the FGAMS family. In terms of assembly, monomer. Part of the FGAM synthase complex composed of 1 PurL, 1 PurQ and 2 PurS subunits.

It localises to the cytoplasm. The catalysed reaction is N(2)-formyl-N(1)-(5-phospho-beta-D-ribosyl)glycinamide + L-glutamine + ATP + H2O = 2-formamido-N(1)-(5-O-phospho-beta-D-ribosyl)acetamidine + L-glutamate + ADP + phosphate + H(+). It participates in purine metabolism; IMP biosynthesis via de novo pathway; 5-amino-1-(5-phospho-D-ribosyl)imidazole from N(2)-formyl-N(1)-(5-phospho-D-ribosyl)glycinamide: step 1/2. Functionally, part of the phosphoribosylformylglycinamidine synthase complex involved in the purines biosynthetic pathway. Catalyzes the ATP-dependent conversion of formylglycinamide ribonucleotide (FGAR) and glutamine to yield formylglycinamidine ribonucleotide (FGAM) and glutamate. The FGAM synthase complex is composed of three subunits. PurQ produces an ammonia molecule by converting glutamine to glutamate. PurL transfers the ammonia molecule to FGAR to form FGAM in an ATP-dependent manner. PurS interacts with PurQ and PurL and is thought to assist in the transfer of the ammonia molecule from PurQ to PurL. This chain is Phosphoribosylformylglycinamidine synthase subunit PurL, found in Enterococcus faecalis (strain ATCC 700802 / V583).